A 30-amino-acid polypeptide reads, in one-letter code: Cyclotide mela-5 (30 aa).

Positions 1–30 (GSAIACGESCFKFKCYTPGCSCSYPICKKD) form a cross-link, cyclopeptide (Gly-Asp). Cystine bridges form between Cys-6–Cys-20, Cys-10–Cys-22, and Cys-15–Cys-27.

In terms of processing, this is a cyclic peptide. Contains 3 disulfide bonds.

Functionally, probably participates in a plant defense mechanism (Potential). Binds to and induces leakage in phospholipd membranes, particularly ones containing 1-palmitoyl-2-oleophosphatidylethanolamine (POPE). The protein is Cyclotide mela-5 of Melicytus latifolius (Norfolk Island mahoe).